Here is a 175-residue protein sequence, read N- to C-terminus: MNLDFIKSKIAAVPDFPKPGIMFRDITPLLADPQGLRKTAEAMAQELKNKGIQPTIVAGTESRGFIFGVALAEVLGLGFVPVRKPGKLPRATYSVKYDLEYGSDSLEIHQDAFKVTDEVLVVDDLLATGGTAKATVDLIEKTQAKVAGLIFVMELDGLSGREVLAGYNVSALIKF.

It belongs to the purine/pyrimidine phosphoribosyltransferase family. Homodimer.

It is found in the cytoplasm. The enzyme catalyses AMP + diphosphate = 5-phospho-alpha-D-ribose 1-diphosphate + adenine. The protein operates within purine metabolism; AMP biosynthesis via salvage pathway; AMP from adenine: step 1/1. Catalyzes a salvage reaction resulting in the formation of AMP, that is energically less costly than de novo synthesis. The sequence is that of Adenine phosphoribosyltransferase from Francisella tularensis subsp. tularensis (strain WY96-3418).